The sequence spans 330 residues: Aspartate--ammonia ligase (330 aa).

Belongs to the class-II aminoacyl-tRNA synthetase family. AsnA subfamily.

Its subcellular location is the cytoplasm. The enzyme catalyses L-aspartate + NH4(+) + ATP = L-asparagine + AMP + diphosphate + H(+). It participates in amino-acid biosynthesis; L-asparagine biosynthesis; L-asparagine from L-aspartate (ammonia route): step 1/1. This Streptococcus equi subsp. zooepidemicus (strain H70) protein is Aspartate--ammonia ligase.